The following is a 341-amino-acid chain: MKIAIDAMGGDNAPEVVIAGVEKARDANKELTFLLYGDEAKIKPLIHHDERLTIIHTPEKINSDDEPVRAIRRKKQASMVLAAQAVKQGEADAMVSLGSTGALLAAGLFIIGRIRAIERPGLLPTLPTVDGKGFVMLDVGANAENRPYHLLQYAIMGSYYAKDVRNVENPRVGLLNNGTEANKGDKMHQEAHDLLAAAPGINFVGNVESSDILNGPADVVVTDGFTGNATLKAIEGTVRTVMHMLKGAIYEGGLSGKLGGLFLKGNLKSMASTFDISSYGGAVLLGLKAPLIKAHGAADAETVYYTLLQTAKMVQNGTVTKVADYFDAHPEVAEAKTAEKA.

It belongs to the PlsX family. As to quaternary structure, homodimer. Probably interacts with PlsY.

The protein localises to the cytoplasm. The catalysed reaction is a fatty acyl-[ACP] + phosphate = an acyl phosphate + holo-[ACP]. The protein operates within lipid metabolism; phospholipid metabolism. Catalyzes the reversible formation of acyl-phosphate (acyl-PO(4)) from acyl-[acyl-carrier-protein] (acyl-ACP). This enzyme utilizes acyl-ACP as fatty acyl donor, but not acyl-CoA. The chain is Phosphate acyltransferase from Lacticaseibacillus casei (strain BL23) (Lactobacillus casei).